Here is a 47-residue protein sequence, read N- to C-terminus: Defensin Tk-AMP-D1.1 (47 aa).

4 disulfide bridges follow: Cys3–Cys47, Cys14–Cys34, Cys20–Cys41, and Cys24–Cys43.

Functionally, plant defense peptide. The sequence is that of Defensin Tk-AMP-D1.1 from Triticum kiharae (Wheat).